The primary structure comprises 849 residues: DNA mismatch repair protein MutS (849 aa).

665-672 (GPNMAGKS) is an ATP binding site.

It belongs to the DNA mismatch repair MutS family.

This protein is involved in the repair of mismatches in DNA. It is possible that it carries out the mismatch recognition step. This protein has a weak ATPase activity. This chain is DNA mismatch repair protein MutS, found in Wolbachia pipientis wMel.